The sequence spans 608 residues: MASPARAPVLALKDVRLADGAKPLFDGVDLALEPRVRACLVGRNGAGKSTLLKILAGQGVEADSGERAVQPGAKVVYVSQEPEITGETLLDYATAGGAQDYEAQAALADFGLDPDKSAKGLSGGETRRAALARAFAEQPDVLLLDEPTNHLDIFAIQTLEDELAASKCAALIVSHDRAFLNRVTERCFWLEHRKIRRLDKGFSEFEAWAESIMAADAEEARRLDKVLERENAWLARGVQGRRARNEGRRRALLALRAEKKDRQSELRGTMTMAVESAGTSGKRVVEAKGVTKRFGERTIVENFSTRILRGDRVALVGPNGAGKTTLVKLLLGELERDAGTVQLGTNLEVSYIDQARMALSDKITVWDFLTPGGGDSIIVRGHPKHVAGYAKEFLFTDAQLRQPVTSLSGGERNRLLLARALANPTNLMVLDEPTNDLDMDTLDLLEDLLADFDGTLILVSHDRDFIDRLASSTIALDGKGGVVETPGGWTDLMDQNPDFFKASKGGTAFAPVSKAATKPAPAAPAAPKKSAKLSYKDQRRLEECEALIAKSPAIIAKLEEALADPNLYTRDPATFDKTMKALDKARADLEQAEMEWLELEEKKENLAG.

2 consecutive ABC transporter domains span residues 7–217 (APVL…AADA) and 285–512 (VEAK…FAPV). ATP is bound by residues 42–49 (GRNGAGKS) and 317–324 (GPNGAGKT). The interval 522-608 (AAPAAPKKSA…LEEKKENLAG (87 aa)) is C-terminal domain (CTD), binds DNA.

Belongs to the ABC transporter superfamily. ABCF family. Uup subfamily.

It is found in the cytoplasm. It catalyses the reaction ATP + H2O = ADP + phosphate + H(+). Its function is as follows. Probably plays a role in ribosome assembly or function. May be involved in resolution of branched DNA intermediates that result from template switching in postreplication gaps. Binds DNA and has ATPase activity. One of a cluster of genes involved in attachment of the holdfast to the cell. The holdfast is a structure that allows the bacteria to firmly adhere to surfaces. The polypeptide is ATP-binding protein Uup (Caulobacter vibrioides (strain ATCC 19089 / CIP 103742 / CB 15) (Caulobacter crescentus)).